A 332-amino-acid polypeptide reads, in one-letter code: Malate dehydrogenase, cytoplasmic (332 aa).

Residues Q16 to I17, D43, and G90 contribute to the NAD(+) site. R99 provides a ligand contact to oxaloacetate. NAD(+) contacts are provided by Q113 and N132. Residues N132, R163, H188, and S243 each contribute to the oxaloacetate site. The active-site Proton acceptor is H188.

It belongs to the LDH/MDH superfamily. MDH type 2 family. Homodimer.

Its subcellular location is the cytoplasm. The enzyme catalyses (S)-malate + NAD(+) = oxaloacetate + NADH + H(+). This is Malate dehydrogenase, cytoplasmic (NR1) from Beta vulgaris (Sugar beet).